The primary structure comprises 221 residues: Endonuclease V (221 aa).

Mg(2+)-binding residues include aspartate 38 and aspartate 104.

This sequence belongs to the endonuclease V family. It depends on Mg(2+) as a cofactor.

The protein localises to the cytoplasm. It carries out the reaction Endonucleolytic cleavage at apurinic or apyrimidinic sites to products with a 5'-phosphate.. In terms of biological role, DNA repair enzyme involved in the repair of deaminated bases. Selectively cleaves double-stranded DNA at the second phosphodiester bond 3' to a deoxyinosine leaving behind the intact lesion on the nicked DNA. Recognizes only deoxyinosine. This Archaeoglobus fulgidus (strain ATCC 49558 / DSM 4304 / JCM 9628 / NBRC 100126 / VC-16) protein is Endonuclease V.